Here is a 290-residue protein sequence, read N- to C-terminus: S-adenosylmethionine decarboxylase proenzyme (290 aa).

Ser138 (schiff-base intermediate with substrate; via pyruvic acid) is an active-site residue. Ser138 is modified (pyruvic acid (Ser); by autocatalysis). His143 serves as the catalytic Proton acceptor; for processing activity. Catalysis depends on Cys166, which acts as the Proton donor; for catalytic activity.

This sequence belongs to the prokaryotic AdoMetDC family. Type 2 subfamily. Heterooctamer of four alpha and four beta chains arranged as a tetramer of alpha/beta heterodimers. It depends on pyruvate as a cofactor. Is synthesized initially as an inactive proenzyme. Formation of the active enzyme involves a self-maturation process in which the active site pyruvoyl group is generated from an internal serine residue via an autocatalytic post-translational modification. Two non-identical subunits are generated from the proenzyme in this reaction, and the pyruvate is formed at the N-terminus of the alpha chain, which is derived from the carboxyl end of the proenzyme. The post-translation cleavage follows an unusual pathway, termed non-hydrolytic serinolysis, in which the side chain hydroxyl group of the serine supplies its oxygen atom to form the C-terminus of the beta chain, while the remainder of the serine residue undergoes an oxidative deamination to produce ammonia and the pyruvoyl group blocking the N-terminus of the alpha chain.

The enzyme catalyses S-adenosyl-L-methionine + H(+) = S-adenosyl 3-(methylsulfanyl)propylamine + CO2. Its pathway is amine and polyamine biosynthesis; S-adenosylmethioninamine biosynthesis; S-adenosylmethioninamine from S-adenosyl-L-methionine: step 1/1. In terms of biological role, catalyzes the decarboxylation of S-adenosylmethionine to S-adenosylmethioninamine (dcAdoMet), the propylamine donor required for the synthesis of the polyamines spermine and spermidine from the diamine putrescine. The polypeptide is S-adenosylmethionine decarboxylase proenzyme (Heliobacterium modesticaldum (strain ATCC 51547 / Ice1)).